We begin with the raw amino-acid sequence, 158 residues long: Protein Smg homolog (158 aa).

This sequence belongs to the Smg family.

The chain is Protein Smg homolog from Coxiella burnetii (strain RSA 331 / Henzerling II).